The primary structure comprises 307 residues: Pyridoxal 5'-phosphate synthase subunit PdxS (307 aa).

D37 provides a ligand contact to D-ribose 5-phosphate. K94 serves as the catalytic Schiff-base intermediate with D-ribose 5-phosphate. Residue G166 participates in D-ribose 5-phosphate binding. D-glyceraldehyde 3-phosphate is bound at residue R178. D-ribose 5-phosphate-binding positions include G227 and 248 to 249 (GS).

It belongs to the PdxS/SNZ family. As to quaternary structure, in the presence of PdxT, forms a dodecamer of heterodimers.

It carries out the reaction aldehydo-D-ribose 5-phosphate + D-glyceraldehyde 3-phosphate + L-glutamine = pyridoxal 5'-phosphate + L-glutamate + phosphate + 3 H2O + H(+). It functions in the pathway cofactor biosynthesis; pyridoxal 5'-phosphate biosynthesis. Its function is as follows. Catalyzes the formation of pyridoxal 5'-phosphate from ribose 5-phosphate (RBP), glyceraldehyde 3-phosphate (G3P) and ammonia. The ammonia is provided by the PdxT subunit. Can also use ribulose 5-phosphate and dihydroxyacetone phosphate as substrates, resulting from enzyme-catalyzed isomerization of RBP and G3P, respectively. This is Pyridoxal 5'-phosphate synthase subunit PdxS from Mycobacterium leprae (strain Br4923).